The sequence spans 1407 residues: MKDLLKFLKAQTKTEEFDAIKIALASPDMIRSWSFGEVKKPETINYRTFKPERDGLFCARIFGPVKDYECLCGKYKRLKHRGVICEKCGVEVTQTKVRRERMGHIELASPTAHIWFLKSLPSRIGLLLDMPLRDIERVLYFESYVVIEGGMTNLERQQILTEEQYLDALEEFGDEFDAKMGAEAIQALLKSMDLEQECETLREELNETNSETKRKKLTKRIKLLEAFVQSGNKPEWMILTVLPVLPPDLRPLVPLDGGRFATSDLNDLYRRVINRNNRLKRLLDLAAPDIIVRNEKRMLQEAVDALLDNGRRGRAITGSNKRPLKSLADMIKGKQGRFRQNLLGKRVDYSGRSVITVGPYLRLHQCGLPKKMALELFKPFIYGKLELRGLATTIKAAKKMVEREEAVVWDILDEVIREHPVLLNRAPTLHRLGIQAFEPVLIEGKAIQLHPLVCAAYNADFDGDQMAVHVPLTLEAQLEARALMMSTNNILSPANGEPIIVPSQDVVLGLYYMTRDCVNAKGEGMVLTGPKEAERIYRAGLASLHARVKVRITEYEKDENGEFVAHTSLKDTTVGRAILWMIVPKGLPFSIVNQALGKKAISKMLNTCYRILGLKPTVIFADQTMYTGFAYAARSGASVGIDDMVIPEKKHEIISEAEAEVAEIQEQFQSGLVTAGERYNKVIDIWAAANDRVSKAMMDNLQTETVINRDGQEEQQVSFNSIYMMADSGARGSAAQIRQLAGMRGLMAKPDGSIIETPITANFREGLNVLQYFISTHGARKGLADTALKTANSGYLTRRLVDVAQDLVVTEDDCGTHEGILMTPVIEGGDVKEPLRDRVLGRVTAEDVLKPGTADILVPRNTLLHEQWCDLLEANSVDAVKVRSVVSCDTDFGVCAHCYGRDLARGHIINKGEAIGVIAAQSIGEPGTQLTMRTFHIGGAASRAAAESSIQVKNKGSIKLSNVKSVVNSSGKLVITSRNTELKLIDEFGRTKESYKVPYGAVMAKGDGEQVAGGETVANWDPHTMPVITEVSGFIRFTDMIDGQTITRQTDELTGLSSLVVLDSAERTTGGKDLRPALKIVDAQGNDVLIPGTDMPAQYFLPGKAIVQLEDGVQISSGDTLARIPQESGGTKDITGGLPRVADLFEARRPKEPAILAEIAGIVSFGKETKGKRRLVITPVDGSDPYEEMIPKWRQLNVFEGERVERGDVISDGPEAPHDILRLRGVHAVTRYIVNEVQDVYRLQGVKINDKHIEVIVRQMLRKATIESAGSSDFLEGEQVEYSRVKIANRELEANGKVGATFSRDLLGITKASLATESFISAASFQETTRVLTEAAVAGKRDELRGLKENVIVGRLIPAGTGYAYHQDRMRRRAAGEQPATPQVTAEDASASLAELLNAGLGGSDNE.

Zn(2+) is bound by residues C70, C72, C85, and C88. The Mg(2+) site is built by D460, D462, and D464. Positions 814, 888, 895, and 898 each coordinate Zn(2+).

It belongs to the RNA polymerase beta' chain family. As to quaternary structure, the RNAP catalytic core consists of 2 alpha, 1 beta, 1 beta' and 1 omega subunit. When a sigma factor is associated with the core the holoenzyme is formed, which can initiate transcription. The cofactor is Mg(2+). Zn(2+) serves as cofactor.

The catalysed reaction is RNA(n) + a ribonucleoside 5'-triphosphate = RNA(n+1) + diphosphate. In terms of biological role, DNA-dependent RNA polymerase catalyzes the transcription of DNA into RNA using the four ribonucleoside triphosphates as substrates. In Salmonella choleraesuis (strain SC-B67), this protein is DNA-directed RNA polymerase subunit beta'.